Consider the following 208-residue polypeptide: Small ribosomal subunit protein uS4 (208 aa).

The S4 RNA-binding domain maps to 98 to 161; sequence RRLDNVIYRM…KELEIIKESL (64 aa).

The protein belongs to the universal ribosomal protein uS4 family. Part of the 30S ribosomal subunit. Contacts protein S5. The interaction surface between S4 and S5 is involved in control of translational fidelity.

Functionally, one of the primary rRNA binding proteins, it binds directly to 16S rRNA where it nucleates assembly of the body of the 30S subunit. With S5 and S12 plays an important role in translational accuracy. This chain is Small ribosomal subunit protein uS4, found in Thermodesulfovibrio yellowstonii (strain ATCC 51303 / DSM 11347 / YP87).